The following is a 283-amino-acid chain: Phosphatidylglycerol--prolipoprotein diacylglyceryl transferase (283 aa).

4 helical membrane-spanning segments follow: residues 17-37 (LAVR…TFLG), 56-76 (FLTW…VLFY), 92-112 (WEGG…IWLF), and 117-137 (GIGF…GLAS). Residue Arg-139 participates in a 1,2-diacyl-sn-glycero-3-phospho-(1'-sn-glycerol) binding. A run of 3 helical transmembrane segments spans residues 194-214 (PSQL…VWLF), 222-242 (GQVA…AEFA), and 255-275 (GLSM…VGFV).

Belongs to the Lgt family.

Its subcellular location is the cell inner membrane. It catalyses the reaction L-cysteinyl-[prolipoprotein] + a 1,2-diacyl-sn-glycero-3-phospho-(1'-sn-glycerol) = an S-1,2-diacyl-sn-glyceryl-L-cysteinyl-[prolipoprotein] + sn-glycerol 1-phosphate + H(+). Its pathway is protein modification; lipoprotein biosynthesis (diacylglyceryl transfer). Its function is as follows. Catalyzes the transfer of the diacylglyceryl group from phosphatidylglycerol to the sulfhydryl group of the N-terminal cysteine of a prolipoprotein, the first step in the formation of mature lipoproteins. This is Phosphatidylglycerol--prolipoprotein diacylglyceryl transferase from Neisseria meningitidis serogroup C / serotype 2a (strain ATCC 700532 / DSM 15464 / FAM18).